The chain runs to 254 residues: MIRKAQFKKSEIEKFRLEIARSIVAGKLQNCRSVLSRTARKSKNESEKQDIKEAIGKIEKNISLLEKAESIESIRGYEGASAKTYFSVFDYCIIQQKEDFQFHKRTRRPPRSRTNALLSFLYSLLTNDCIAVCQAVGLDPYIGFLHDERPGRPSLALDMMEEFRPFIDRLVFTLINRKQIQVSDFLEKPGSVFFINDDSRKELIKSYQERKKEEIFHPWLNIKSTVGELPYLQARIFARTLRGDLKYYIPFIWK.

Glu-78, His-146, and Glu-161 together coordinate Mn(2+).

This sequence belongs to the CRISPR-associated endonuclease Cas1 family. As to quaternary structure, homodimer, forms a heterotetramer with a Cas2 homodimer. The cofactor is Mg(2+). Requires Mn(2+) as cofactor.

Its function is as follows. CRISPR (clustered regularly interspaced short palindromic repeat), is an adaptive immune system that provides protection against mobile genetic elements (viruses, transposable elements and conjugative plasmids). CRISPR clusters contain spacers, sequences complementary to antecedent mobile elements, and target invading nucleic acids. CRISPR clusters are transcribed and processed into CRISPR RNA (crRNA). Acts as a dsDNA endonuclease. Involved in the integration of spacer DNA into the CRISPR cassette. In Leptospira interrogans serogroup Icterohaemorrhagiae serovar Lai (strain 56601), this protein is CRISPR-associated endonuclease Cas1.